The following is a 417-amino-acid chain: Serine--tRNA ligase (417 aa).

An L-serine-binding site is contributed by 226 to 228 (TSE). ATP contacts are provided by residues 257–259 (RRE) and valine 273. Glutamate 280 contributes to the L-serine binding site. Position 344–347 (344–347 (EVTS)) interacts with ATP. Residue threonine 379 participates in L-serine binding.

The protein belongs to the class-II aminoacyl-tRNA synthetase family. Type-1 seryl-tRNA synthetase subfamily. Homodimer. The tRNA molecule binds across the dimer.

It localises to the cytoplasm. It catalyses the reaction tRNA(Ser) + L-serine + ATP = L-seryl-tRNA(Ser) + AMP + diphosphate + H(+). The enzyme catalyses tRNA(Sec) + L-serine + ATP = L-seryl-tRNA(Sec) + AMP + diphosphate + H(+). It participates in aminoacyl-tRNA biosynthesis; selenocysteinyl-tRNA(Sec) biosynthesis; L-seryl-tRNA(Sec) from L-serine and tRNA(Sec): step 1/1. Its function is as follows. Catalyzes the attachment of serine to tRNA(Ser). Is also able to aminoacylate tRNA(Sec) with serine, to form the misacylated tRNA L-seryl-tRNA(Sec), which will be further converted into selenocysteinyl-tRNA(Sec). The chain is Serine--tRNA ligase from Tropheryma whipplei (strain Twist) (Whipple's bacillus).